The chain runs to 134 residues: DNA-binding protein H-NS, plasmid (134 aa).

Residues 23–67 (LEILEELLEKLSVVVEERRQEESSKEAELKARLEKIESLRQLMLE) adopt a coiled-coil conformation. The disordered stretch occupies residues 77 to 96 (SSFSAKSGAPKKVREPRPAK). Residues 112–117 (QGRTPK) mediate DNA binding.

The protein belongs to the histone-like protein H-NS family. As to quaternary structure, homodimer that oligomerizes on DNA into higher-order complexes that form bridges between disparate regions of DNA compacting it. Interacts with Hha, YdgT and StpA.

The protein resides in the cytoplasm. The protein localises to the nucleoid. Its function is as follows. A DNA-binding protein implicated in transcriptional repression and chromosome organization and compaction. Binds DNA, modifying gene expression, especially non-core genes. Does not regulate the same set of genes as its chromosomal counterpart (tested in S.typhimurium strain SL1344 / SV5015, chromosomal H-NS protein is AC A0A0H3NBY9). Thus it has a not-completely overlapping set of gene targets compared to its chromosomal homolog; many of these target genes are either plasmid-encoded or acquired by horizontally transferred genes (HTG). This protein can function in the absence of H-NS-modulating protein Hha (either chromosomal or plasmid-encoded), although many HTG genes are regulated by an H-NS/Hha complex. Binds nucleation sites in AT-rich DNA and bridges them, forming higher-order nucleoprotein complexes and condensing the chromosome. A subset of genes are repressed by H-NS in association with Hha and/or Cnu (ydgT). The polypeptide is DNA-binding protein H-NS, plasmid (hns) (Salmonella typhi).